Here is a 763-residue protein sequence, read N- to C-terminus: 5-methyltetrahydropteroyltriglutamate--homocysteine methyltransferase (763 aa).

Residues 16-19 (RELK) and lysine 114 each bind 5-methyltetrahydropteroyltri-L-glutamate. Residues 438 to 440 (IGS) and glutamate 491 each bind L-homocysteine. L-methionine is bound by residues 438 to 440 (IGS) and glutamate 491. 5-methyltetrahydropteroyltri-L-glutamate is bound by residues 522-523 (RC) and tryptophan 568. L-homocysteine is bound at residue aspartate 606. Aspartate 606 contacts L-methionine. Glutamate 612 contacts 5-methyltetrahydropteroyltri-L-glutamate. 3 residues coordinate Zn(2+): histidine 648, cysteine 650, and glutamate 672. The Proton donor role is filled by histidine 701. Cysteine 733 contributes to the Zn(2+) binding site.

It belongs to the vitamin-B12 independent methionine synthase family. Zn(2+) is required as a cofactor.

The enzyme catalyses 5-methyltetrahydropteroyltri-L-glutamate + L-homocysteine = tetrahydropteroyltri-L-glutamate + L-methionine. Its pathway is amino-acid biosynthesis; L-methionine biosynthesis via de novo pathway; L-methionine from L-homocysteine (MetE route): step 1/1. Its function is as follows. Catalyzes the transfer of a methyl group from 5-methyltetrahydrofolate to homocysteine resulting in methionine formation. The protein is 5-methyltetrahydropteroyltriglutamate--homocysteine methyltransferase of Parvibaculum lavamentivorans (strain DS-1 / DSM 13023 / NCIMB 13966).